Consider the following 91-residue polypeptide: Small ribosomal subunit protein uS15 (91 aa).

The protein belongs to the universal ribosomal protein uS15 family. Part of the 30S ribosomal subunit. Forms a bridge to the 50S subunit in the 70S ribosome, contacting the 23S rRNA.

One of the primary rRNA binding proteins, it binds directly to 16S rRNA where it helps nucleate assembly of the platform of the 30S subunit by binding and bridging several RNA helices of the 16S rRNA. In terms of biological role, forms an intersubunit bridge (bridge B4) with the 23S rRNA of the 50S subunit in the ribosome. The polypeptide is Small ribosomal subunit protein uS15 (Rickettsia akari (strain Hartford)).